Consider the following 221-residue polypeptide: Sugar transporter SWEET1 (221 aa).

7 helical membrane-spanning segments follow: residues 3-23, 44-63, 68-88, 102-122, 129-149, 160-180, and 186-206; these read AGGV…LGMF, FLPF…YGVL, TLII…LAYL, ATLL…VPDL, LGLF…ADLA, LSFS…IYGF, and YITV…VLFY. In terms of domain architecture, MtN3/slv 1 spans 10-94; that stretch reads FLSSACVLFT…LAYLHYSPQK (85 aa). The MtN3/slv 2 domain occupies 127-212; the sequence is QQLGLFCSVF…VLFYKYPPEQ (86 aa). Residues 149 to 221 form a mediates interaction with TRPV2 region; the sequence is AKIIQTKSTQ…QDTKYRLLQT (73 aa).

It belongs to the SWEET sugar transporter family. As to quaternary structure, interacts with TRPV2; the interaction probably occurs intracellularly and depends on TRPV2 N-glycosylation.

It is found in the golgi apparatus membrane. The protein resides in the cell membrane. Functionally, mediates sugar transport across membranes. May stimulate V(D)J recombination by the activation of RAG1. The sequence is that of Sugar transporter SWEET1 (Slc50a1) from Rattus norvegicus (Rat).